The primary structure comprises 54 residues: Light-harvesting protein B-880 beta chain (54 aa).

Residues 1–20 (AEDRSSLSGVSDAEAKEFHA) lie on the Cytoplasmic side of the membrane. His-19 and His-37 together coordinate a bacteriochlorophyll. Residues 21 to 43 (LFVSSFMGFMVVAVLAHVLAWAW) form a helical membrane-spanning segment. The Periplasmic segment spans residues 44 to 54 (RPWIPGPKGWA).

The protein belongs to the antenna complex beta subunit family. The core complex is formed by different alpha and beta chains, binding bacteriochlorophyll molecules, and arranged most probably in tetrameric structures disposed around the reaction center. The non-pigmented gamma chains may constitute additional components.

It localises to the cell inner membrane. Functionally, antenna complexes are light-harvesting systems, which transfer the excitation energy to the reaction centers. This Rhodoblastus acidophilus (Rhodopseudomonas acidophila) protein is Light-harvesting protein B-880 beta chain.